A 430-amino-acid chain; its full sequence is Adenylosuccinate synthetase (430 aa).

GTP-binding positions include 12–18 (GDEGKGK) and 40–42 (GHT). The active-site Proton acceptor is Asp-13. Residues Asp-13 and Gly-40 each contribute to the Mg(2+) site. IMP is bound by residues 13-16 (DEGK), 38-41 (NAGH), Thr-130, Arg-144, Gln-224, Thr-239, and Arg-303. The Proton donor role is filled by His-41. 299 to 305 (TVTGRKR) is a binding site for substrate. Residues Arg-305, 331–333 (KLD), and 413–415 (STS) contribute to the GTP site.

This sequence belongs to the adenylosuccinate synthetase family. In terms of assembly, homodimer. It depends on Mg(2+) as a cofactor.

It localises to the cytoplasm. The catalysed reaction is IMP + L-aspartate + GTP = N(6)-(1,2-dicarboxyethyl)-AMP + GDP + phosphate + 2 H(+). The protein operates within purine metabolism; AMP biosynthesis via de novo pathway; AMP from IMP: step 1/2. Plays an important role in the de novo pathway of purine nucleotide biosynthesis. Catalyzes the first committed step in the biosynthesis of AMP from IMP. In Cereibacter sphaeroides (strain ATCC 17023 / DSM 158 / JCM 6121 / CCUG 31486 / LMG 2827 / NBRC 12203 / NCIMB 8253 / ATH 2.4.1.) (Rhodobacter sphaeroides), this protein is Adenylosuccinate synthetase.